Here is a 416-residue protein sequence, read N- to C-terminus: Putative L-glutamine:3-amino-2,3-dideoxy-scyllo-inosose aminotransferase (416 aa).

K199 bears the N6-(pyridoxal phosphate)lysine mark.

The protein belongs to the DegT/DnrJ/EryC1 family. L-glutamine:2-deoxy-scyllo-inosose/scyllo-inosose aminotransferase subfamily. Requires pyridoxal 5'-phosphate as cofactor.

The enzyme catalyses 3-amino-2,3-dideoxy-scyllo-inosose + L-glutamine = 2-deoxystreptamine + 2-oxoglutaramate. It participates in metabolic intermediate biosynthesis; 2-deoxystreptamine biosynthesis; 2-deoxystreptamine from D-glucose 6-phosphate: step 4/4. The protein operates within antibiotic biosynthesis; tobramycin biosynthesis. In terms of biological role, catalyzes the transamination of 3-amino-2,3-dideoxy-scyllo-inosose (amino-DOI) into 2-deoxystreptamine (DOS). This Streptoalloteichus tenebrarius (strain ATCC 17920 / DSM 40477 / JCM 4838 / CBS 697.72 / NBRC 16177 / NCIMB 11028 / NRRL B-12390 / A12253. 1 / ISP 5477) (Streptomyces tenebrarius) protein is Putative L-glutamine:3-amino-2,3-dideoxy-scyllo-inosose aminotransferase (tobS2).